The following is a 599-amino-acid chain: Protein linkin (599 aa).

The first 19 residues, 1 to 19 (MKKILPIIWLINLVSGSLS), serve as a signal peptide directing secretion. At 20 to 553 (LEKKAPDLLG…SRLYVTPSAL (534 aa)) the chain is on the extracellular side. Asparagine 50, asparagine 117, asparagine 163, asparagine 361, and asparagine 378 each carry an N-linked (GlcNAc...) asparagine glycan. A helical membrane pass occupies residues 554-574 (IVQSLAVIALVCCMLLMVVVF). The Cytoplasmic segment spans residues 575 to 599 (LHYREKKEDRYERQQQSHRFHFDAM).

The protein belongs to the TIP family. In terms of tissue distribution, expressed in all somatic gonadal cells including distal tip cells, anchor cell, uterine precursor cells and spermatheca precursor cells of the hermaphrodite. Also expressed in the pharynx, pharyngeal-intestinal valve, intestine, excretory cell and canal, seam cells, a subset of hypodermal cells, vulval precursor cells of the hermaphrodite and hook precursor cells in the male.

It localises to the apical cell membrane. The protein resides in the lateral cell membrane. In terms of biological role, probable cell adhesion protein involved in gonadal cell migration. The chain is Protein linkin from Caenorhabditis elegans.